Here is a 269-residue protein sequence, read N- to C-terminus: Carbohydrate metabolism regulator TYE7 (269 aa).

The disordered stretch occupies residues 146–178 (QPKIKQEPGTKAATKPKRRAPRKKLTESQKKAH). Positions 159 to 168 (TKPKRRAPRK) are enriched in basic residues. Over residues 169 to 178 (KLTESQKKAH) the composition is skewed to basic and acidic residues. Residues 173-244 (SQKKAHNKIE…EKATEYILHL (72 aa)) enclose the bHLH domain.

In terms of assembly, efficient DNA binding requires dimerization with another bHLH protein.

It is found in the nucleus. Functionally, key transcriptional regulator of carbohydrate metabolism. Binds the promoter sequences of the glycolytic genes at the CANNTG motif and activates their expression during growth on either fermentable or non-fermentable carbon sources as well as under hypoxic growth conditions. Complete glycolytic activation by GAL4 and TYE7 is required for full virulence. Involved in biofilm formation and negatively regulates hyphal formation under hypoxia. Also controls the expression of the copper transport protein CTR1. The polypeptide is Carbohydrate metabolism regulator TYE7 (TYE7) (Candida albicans (strain SC5314 / ATCC MYA-2876) (Yeast)).